We begin with the raw amino-acid sequence, 95 residues long: Large ribosomal subunit protein bL25 (95 aa).

It belongs to the bacterial ribosomal protein bL25 family. As to quaternary structure, part of the 50S ribosomal subunit; part of the 5S rRNA/L5/L18/L25 subcomplex. Contacts the 5S rRNA. Binds to the 5S rRNA independently of L5 and L18.

This is one of the proteins that binds to the 5S RNA in the ribosome where it forms part of the central protuberance. This is Large ribosomal subunit protein bL25 from Actinobacillus pleuropneumoniae serotype 3 (strain JL03).